A 642-amino-acid chain; its full sequence is Core protein VP4 (642 aa).

The protein belongs to the orbivirus VP4 family.

The protein resides in the virion. The VP4 protein is one of the five proteins (with VP1, VP3, VP6 and VP7) which form the inner capsid of the virus. The polypeptide is Core protein VP4 (Segment-4) (African horse sickness virus (AHSV)).